Reading from the N-terminus, the 1044-residue chain is Pre-mRNA-splicing factor ATP-dependent RNA helicase DHX16 (1044 aa).

2 disordered regions span residues 101 to 210 and 374 to 394; these read EDSE…AYEE and LQGNEEPSAPPTSTQAQQKES. Phosphoserine occurs at positions 103, 106, and 107. Residues 119-130 show a composition bias toward basic residues; sequence QKKRKKRKHLRK. The segment covering 134–143 has biased composition (acidic residues); that stretch reads EEEEEEEEEA. A Phosphoserine modification is found at S163. The span at 169 to 210 shows a compositional bias: basic and acidic residues; sequence RTERERLQDLEERDAFAERVRQRDKDRTRNVLERSDKKAYEE. The 165-residue stretch at 412–576 folds into the Helicase ATP-binding domain; sequence LAAIANHQVL…FDDAPVFRIP (165 aa). 425 to 432 serves as a coordination point for ATP; that stretch reads GETGSGKT. The DEAH box motif lies at 523–526; that stretch reads DEAH. The Helicase C-terminal domain maps to 601–774; that stretch reads SVLQIHVTQP…NVVLLLKSLG (174 aa). Residue T715 is modified to Phosphothreonine.

This sequence belongs to the DEAD box helicase family. DEAH subfamily. DDX16/PRP8 sub-subfamily. Component of pre-catalytic spliceosome complexes. Component of the minor spliceosome, which splices U12-type introns. Interacts with GPKOW. Interacts with TRIM6. Interacts with RIGI.

Its subcellular location is the nucleus. It localises to the nucleoplasm. The protein resides in the cytoplasm. The catalysed reaction is ATP + H2O = ADP + phosphate + H(+). Functionally, required for pre-mRNA splicing as a component of the spliceosome. Contributes to pre-mRNA splicing after spliceosome formation and prior to the first transesterification reaction. As a component of the minor spliceosome, involved in the splicing of U12-type introns in pre-mRNAs. Also plays a role in innate antiviral response by acting as a pattern recognition receptor sensing splicing signals in viral RNA. Mechanistically, TRIM6 promotes the interaction between unanchored 'Lys-48'-polyubiquitin chains and DHX16, leading to DHX16 interaction with RIGI and ssRNA to amplify RIGI-dependent innate antiviral immune responses. This is Pre-mRNA-splicing factor ATP-dependent RNA helicase DHX16 (DHX16) from Pan troglodytes (Chimpanzee).